The following is a 234-amino-acid chain: Mitochondrial assembly of ribosomal large subunit protein 1 (234 aa).

Residues 63–88 (SEPGLEERAEGTVNEGRPESDAADHT) are disordered.

The protein belongs to the Iojap/RsfS family. Associates with the mitochondrial ribosome large subunit (39S) via interaction with MRPL12 and/or MRPL14. The interaction generates steric hindrance that is expected to prevent premature association of the 28S and 39S ribosomal subunits. Interacts with intermediates of the mitochondrial ribosome large subunit (mt-LSU) (recruits the mitochondrial ribosome and complex I assembly factor AltMIEF1 and NDUFAB1); regulates mitochondrial ribosomes assembly. Interacts with MRPL12 and MRPL14.

The protein resides in the mitochondrion matrix. Functionally, required for normal mitochondrial ribosome function and mitochondrial translation. May play a role in ribosome biogenesis by preventing premature association of the 28S and 39S ribosomal subunits. Interacts with mitochondrial ribosomal protein uL14m (MRPL14), probably blocking formation of intersubunit bridge B8, preventing association of the 28S and 39S ribosomal subunits. Addition to isolated mitochondrial ribosomal subunits partially inhibits translation, probably by interfering with the association of the 28S and 39S ribosomal subunits and the formation of functional ribosomes. May also participate in the assembly and/or regulation of the stability of the large subunit of the mitochondrial ribosome. May function as a ribosomal silencing factor. The sequence is that of Mitochondrial assembly of ribosomal large subunit protein 1 (MALSU1) from Homo sapiens (Human).